The following is a 380-amino-acid chain: Cytochrome b (380 aa).

Transmembrane regions (helical) follow at residues 34–54 (FGSL…LLAT), 78–99 (WLIR…YLHI), 114–134 (WNTG…GYVL), and 179–199 (FFAL…IHLT). Heme b-binding residues include His-84 and His-98. Positions 183 and 197 each coordinate heme b. His-202 lines the a ubiquinone pocket. Helical transmembrane passes span 227 to 247 (LKDI…ALFS), 289 to 309 (LGGV…PLLH), 321 to 341 (LSQL…WVGS), and 348 to 368 (FIII…LLFP).

It belongs to the cytochrome b family. The cytochrome bc1 complex contains 11 subunits: 3 respiratory subunits (MT-CYB, CYC1 and UQCRFS1), 2 core proteins (UQCRC1 and UQCRC2) and 6 low-molecular weight proteins (UQCRH/QCR6, UQCRB/QCR7, UQCRQ/QCR8, UQCR10/QCR9, UQCR11/QCR10 and a cleavage product of UQCRFS1). This cytochrome bc1 complex then forms a dimer. It depends on heme b as a cofactor.

The protein localises to the mitochondrion inner membrane. In terms of biological role, component of the ubiquinol-cytochrome c reductase complex (complex III or cytochrome b-c1 complex) that is part of the mitochondrial respiratory chain. The b-c1 complex mediates electron transfer from ubiquinol to cytochrome c. Contributes to the generation of a proton gradient across the mitochondrial membrane that is then used for ATP synthesis. In Cepphus grylle (Black guillemot), this protein is Cytochrome b (MT-CYB).